The following is a 233-amino-acid chain: uncharacterized protein (233 aa).

The segment covering 1-10 (MSSKLSKKKL) has biased composition (basic residues). The tract at residues 1-90 (MSSKLSKKKL…KRQKGKNNDR (90 aa)) is disordered. Basic and acidic residues predominate over residues 11–56 (KSLEYRSKKFDKKSQSLEEHEKKVQQKNEELEKKAADKISRDELPE). Residues 76-85 (KTLKSKRQKG) show a composition bias toward basic residues. Positions 92-171 (VILFVGNLPK…RKINIELTAG (80 aa)) constitute an RRM domain. 2 stretches are compositionally biased toward basic and acidic residues: residues 194 to 216 (MRQR…KAVA) and 224 to 233 (IHPDRLRLLQ). A disordered region spans residues 194–233 (MRQRVASEEQQAGEEKMARKAVADEGLESGIHPDRLRLLQ).

It localises to the nucleus. It is found in the nucleolus. This is an uncharacterized protein from Schizosaccharomyces pombe (strain 972 / ATCC 24843) (Fission yeast).